We begin with the raw amino-acid sequence, 585 residues long: MAGUK p55 subfamily member 3 (585 aa).

2 consecutive L27 domains span residues 6–60 (EDSG…ERQS) and 61–118 (PTPV…FDPV). Residues 137–212 (IVRLVKNKEP…LAQSQGSITL (76 aa)) form the PDZ domain. The 71-residue stretch at 226–296 (ESKVFMRALF…PSKGFQERRL (71 aa)) folds into the SH3 domain. Residue serine 307 is modified to Phosphoserine. One can recognise a Guanylate kinase-like domain in the interval 385 to 570 (PRLVVLIGSL…AYSQLKVVLE (186 aa)).

Belongs to the MAGUK family. As to quaternary structure, interacts with HTR2C; this interaction stabilizes the receptor at the plasma membrane and prevents the desensitization of the HTR2C receptor-mediated calcium response. Interacts with HTR2A. Interacts with HTR4. Interacts (via PDZ domain) with CADM1 (via C-terminus)Interacts (via PDZ domain) with CADM1; this interaction connects CADM1 with DLG1. Interacts (via Guanylate kinase-like domain) with PALS1. Interacts with DLG1 (via N-terminus); this interaction connects CADM1 with DLG1 and links CADM1 with the regulatory subunit of phosphoinositide-3-kinase (PI3K) by forming a multiprotein complex and participates in cell spreading. Expressed in retina (at protein level) at the subapical region (SAR) adjacent to adherens junctions at the OLM, and at the OPL.

It is found in the cell membrane. Its subcellular location is the apical cell membrane. It localises to the cell junction. The protein resides in the adherens junction. In terms of biological role, participates in cell spreading through the phosphoinositide-3-kinase (PI3K) pathway by connecting CADM1 to DLG1 and the regulatory subunit of phosphoinositide-3-kinase (PI3K). Stabilizes HTR2C at the plasma membrane and prevents its desensitization. May participates in the maintenance of adherens junctions. The polypeptide is MAGUK p55 subfamily member 3 (Homo sapiens (Human)).